Here is a 149-residue protein sequence, read N- to C-terminus: Probable cyclic pyranopterin monophosphate synthase (149 aa).

Substrate contacts are provided by residues 67–69 (LCH) and 103–104 (ME). Asp118 is a catalytic residue.

The protein belongs to the MoaC family. As to quaternary structure, homohexamer; trimer of dimers.

It catalyses the reaction (8S)-3',8-cyclo-7,8-dihydroguanosine 5'-triphosphate = cyclic pyranopterin phosphate + diphosphate. It functions in the pathway cofactor biosynthesis; molybdopterin biosynthesis. Catalyzes the conversion of (8S)-3',8-cyclo-7,8-dihydroguanosine 5'-triphosphate to cyclic pyranopterin monophosphate (cPMP). In Saccharolobus solfataricus (strain ATCC 35092 / DSM 1617 / JCM 11322 / P2) (Sulfolobus solfataricus), this protein is Probable cyclic pyranopterin monophosphate synthase.